We begin with the raw amino-acid sequence, 616 residues long: Bifunctional 2-aminoethylphosphonate cytidylyltransferase/aminotransferase (616 aa).

A 2-aminoethylphosphonate cytidylyltransferase region spans residues 1–240 (MIKQAVILAG…VKNIYPHIVE (240 aa)). The CMP-(2-aminoethyl)phosphonate site is built by Leu-8, Gly-10, Gly-11, Lys-25, Thr-83, Thr-88, Glu-104, and Ser-105. Positions 106 and 136 each coordinate Mg(2+). Residues Asp-136, Lys-153, and Glu-196 each coordinate CMP-(2-aminoethyl)phosphonate. Positions 220 and 222 each coordinate Mg(2+). A 2-aminoethylphosphonate aminotransferase region spans residues 250–616 (EVLLNPGPAT…EYMNGIGVGV (367 aa)). Positions 313, 314, 315, 390, 441, and 490 each coordinate pyridoxal 5'-phosphate.

In the N-terminal section; belongs to the LicC/PntC cytidylyltransferase family. It in the C-terminal section; belongs to the class-V pyridoxal-phosphate-dependent aminotransferase family. PhnW subfamily. Homodimer. It depends on Mg(2+) as a cofactor. Requires Zn(2+) as cofactor. The cofactor is pyridoxal 5'-phosphate.

It carries out the reaction (2-aminoethyl)phosphonate + CTP = CMP-(2-aminoethyl)phosphonate + diphosphate. It catalyses the reaction (2-aminoethyl)phosphonate + pyruvate = phosphonoacetaldehyde + L-alanine. It participates in phosphorus metabolism; phosphonate biosynthesis. Its activity is regulated as follows. Cytidylyltransferase activity is inhibited in the presence of EDTA and is restored by the addition of Mg(2+) or Zn(2+). In terms of biological role, bifunctional transferase involved in the biosynthesis of cell-surface phosphonates. The aminotransferase region catalyzes the transformation of phosphonoacetaldehyde (PnAA) to 2-aminoethylphosphonate (AEP). The cytidylyltransferase region catalyzes the activation of 2-aminoethylphosphonate (AEP) to CMP-2-aminoethylphosphonate (CMP-AEP). Cannot use phosphocholine. Exhibits strong activity towards CTP, limited activity towards ATP and no activity with GTP. The polypeptide is Bifunctional 2-aminoethylphosphonate cytidylyltransferase/aminotransferase (Treponema denticola (strain ATCC 35405 / DSM 14222 / CIP 103919 / JCM 8153 / KCTC 15104)).